A 239-amino-acid chain; its full sequence is Probable transcriptional regulatory protein EF_2866 (239 aa).

Belongs to the TACO1 family. YeeN subfamily.

The protein resides in the cytoplasm. The protein is Probable transcriptional regulatory protein EF_2866 of Enterococcus faecalis (strain ATCC 700802 / V583).